A 330-amino-acid chain; its full sequence is Phosphate acyltransferase (330 aa).

It belongs to the PlsX family. As to quaternary structure, homodimer. Probably interacts with PlsY.

It is found in the cytoplasm. It catalyses the reaction a fatty acyl-[ACP] + phosphate = an acyl phosphate + holo-[ACP]. Its pathway is lipid metabolism; phospholipid metabolism. Its function is as follows. Catalyzes the reversible formation of acyl-phosphate (acyl-PO(4)) from acyl-[acyl-carrier-protein] (acyl-ACP). This enzyme utilizes acyl-ACP as fatty acyl donor, but not acyl-CoA. In Streptococcus pneumoniae serotype 2 (strain D39 / NCTC 7466), this protein is Phosphate acyltransferase.